Reading from the N-terminus, the 367-residue chain is Aflatoxin B1 aldehyde reductase member 2 (367 aa).

The N-terminal 46 residues, 1-46 (MLRAVSRAVSRAAVRCAWRSGPSVARPLAMSRSPAPRAVSGAPLRP), are a transit peptide targeting the mitochondrion. The tract at residues 27–46 (PLAMSRSPAPRAVSGAPLRP) is disordered. The residue at position 40 (serine 40) is a Phosphoserine. Position 48 is a phosphothreonine (threonine 48). Aspartate 80 provides a ligand contact to NADP(+). The active-site Proton donor is the tyrosine 85. An N6-acetyllysine modification is found at lysine 136. Histidine 149 lines the substrate pocket. Residues 179–180 (SN), glutamine 205, 234–244 (NPLAGGLLTGK), and arginine 258 contribute to the NADP(+) site. Lysine 244 is modified (N6-succinyllysine). Phosphoserine is present on serine 263. Substrate is bound by residues tyrosine 268 and arginine 271. Residue 326 to 334 (SSLEQLEQN) coordinates NADP(+). Residue arginine 367 participates in substrate binding.

This sequence belongs to the aldo/keto reductase family. Aldo/keto reductase 2 subfamily. Homodimer. Heterodimer with AKR7A1.

The protein localises to the mitochondrion. Its subcellular location is the golgi apparatus. The protein resides in the golgi stack. It is found in the cytoplasm. The catalysed reaction is 4-hydroxybutanoate + NADP(+) = succinate semialdehyde + NADPH + H(+). Functionally, catalyzes the NADPH-dependent reduction of succinic semialdehyde to gamma-hydroxybutyrate. May have an important role in producing the neuromodulator gamma-hydroxybutyrate (GHB). Has broad substrate specificity. Can reduce the dialdehyde protein-binding form of aflatoxin B1 (AFB1) to the non-binding AFB1 dialcohol. Acts as a 2-carboxybenzaldehyde reductase. The protein is Aflatoxin B1 aldehyde reductase member 2 (Akr7a2) of Rattus norvegicus (Rat).